The primary structure comprises 211 residues: Outer-membrane lipoprotein carrier protein (211 aa).

The signal sequence occupies residues Met-1 to Ala-24.

It belongs to the LolA family. Monomer.

Its subcellular location is the periplasm. Participates in the translocation of lipoproteins from the inner membrane to the outer membrane. Only forms a complex with a lipoprotein if the residue after the N-terminal Cys is not an aspartate (The Asp acts as a targeting signal to indicate that the lipoprotein should stay in the inner membrane). The chain is Outer-membrane lipoprotein carrier protein from Coxiella burnetii (strain RSA 331 / Henzerling II).